We begin with the raw amino-acid sequence, 238 residues long: Ribonuclease PH (238 aa).

Phosphate-binding positions include Arg-86 and 124–126 (GTR).

This sequence belongs to the RNase PH family. Homohexameric ring arranged as a trimer of dimers.

It carries out the reaction tRNA(n+1) + phosphate = tRNA(n) + a ribonucleoside 5'-diphosphate. Functionally, phosphorolytic 3'-5' exoribonuclease that plays an important role in tRNA 3'-end maturation. Removes nucleotide residues following the 3'-CCA terminus of tRNAs; can also add nucleotides to the ends of RNA molecules by using nucleoside diphosphates as substrates, but this may not be physiologically important. Probably plays a role in initiation of 16S rRNA degradation (leading to ribosome degradation) during starvation. The protein is Ribonuclease PH of Yersinia pseudotuberculosis serotype O:1b (strain IP 31758).